A 237-amino-acid chain; its full sequence is UPF0280 protein Mpal_1292 (237 aa).

Belongs to the UPF0280 family.

This chain is UPF0280 protein Mpal_1292, found in Methanosphaerula palustris (strain ATCC BAA-1556 / DSM 19958 / E1-9c).